The chain runs to 340 residues: L-threonine 3-dehydrogenase (340 aa).

Cys-38 provides a ligand contact to Zn(2+). Active-site charge relay system residues include Thr-40 and His-43. Residues His-63, Glu-64, Cys-93, Cys-96, Cys-99, and Cys-107 each contribute to the Zn(2+) site. Residues Ile-175, Asp-195, Arg-200, 262–264, and 286–287 contribute to the NAD(+) site; these read LGI and IY.

The protein belongs to the zinc-containing alcohol dehydrogenase family. As to quaternary structure, homotetramer. Zn(2+) is required as a cofactor.

It localises to the cytoplasm. The enzyme catalyses L-threonine + NAD(+) = (2S)-2-amino-3-oxobutanoate + NADH + H(+). The protein operates within amino-acid degradation; L-threonine degradation via oxydo-reductase pathway; glycine from L-threonine: step 1/2. Its function is as follows. Catalyzes the NAD(+)-dependent oxidation of L-threonine to 2-amino-3-ketobutyrate. The sequence is that of L-threonine 3-dehydrogenase from Legionella pneumophila (strain Corby).